The following is a 371-amino-acid chain: Neuropeptide S receptor (371 aa).

Residues 1–52 (MPANLTEGSFHANQTVPMLDSSPVACTEIVTFTEALVAEEWGSFYSSFKTEQ) lie on the Extracellular side of the membrane. N-linked (GlcNAc...) asparagine glycosylation is found at Asn-4 and Asn-13. The chain crosses the membrane as a helical span at residues 53 to 73 (LITLWVLFVVTIVGNSVVLFS). At 74 to 82 (TCRRKRKSR) the chain is on the cytoplasmic side. The helical transmembrane segment at 83 to 103 (MTFFVTQLAITDSFTGLINIL) threads the bilayer. Over 104 to 123 (TDIIWRFTGDFMAPDLVCRV) the chain is Extracellular. Cys-121 and Cys-197 are disulfide-bonded. A helical transmembrane segment spans residues 124 to 144 (VRYLQVVLLYASTYVLVSLSI). Over 145–164 (DRYHAIVYPMKFLQGEKQAK) the chain is Cytoplasmic. A helical membrane pass occupies residues 165–185 (VLIGIAWSLSFLFSIPTLIIF). Over 186–212 (GKRTLSNGEVQCWALWPDDSYWTPYMT) the chain is Extracellular. A helical membrane pass occupies residues 213-233 (IVAFLVYFIPLAIISVIYGLV). Residues 234–275 (IRTIWMKSKTHETVISNCSDGKLCCSYNRGLISKAKIKAIKY) are Cytoplasmic-facing. Residues 276-296 (SIVIILAFICCWSPYFLFDIL) form a helical membrane-spanning segment. Over 297 to 312 (DNFNVLPDTKERFYAS) the chain is Extracellular. Residues 313–333 (VIIQNLPALNSAINPLIYCIF) form a helical membrane-spanning segment. Residues 334 to 371 (SSSICSPCKMQRSQDSRMTYRERSERHEMQILSKPEFI) lie on the Cytoplasmic side of the membrane.

The protein belongs to the G-protein coupled receptor 1 family. Vasopressin/oxytocin receptor subfamily.

The protein localises to the cell membrane. G-protein coupled receptor for neuropeptide S (NPS). Promotes mobilization of intracellular Ca(2+) stores. Inhibits cell growth in response to NPS binding. Involved in pathogenesis of asthma and other IgE-mediated diseases. The chain is Neuropeptide S receptor (Npsr1) from Mus musculus (Mouse).